We begin with the raw amino-acid sequence, 97 residues long: Osteocalcin (97 aa).

The N-terminal stretch at 1-20 (MKAAALLLLAALLTFSLCRS) is a signal peptide. A propeptide spanning residues 21-48 (APDGSDARSAKAFISHRQRAEMVRRQKR) is cleaved from the precursor. A Gla domain is found at 49-95 (HYAQDSGVAGAPPNPLEAQREVCELSPDCDELADQIGFQEAYRRFYG). Ca(2+) contacts are provided by E65, E69, E72, and D78. 4-carboxyglutamate occurs at positions 65, 69, and 72. Residues C71 and C77 are joined by a disulfide bond.

This sequence belongs to the osteocalcin/matrix Gla protein family. Gamma-carboxyglutamate residues are formed by vitamin K dependent carboxylation by GGCX. These residues are essential for the binding of calcium.

It is found in the secreted. Its function is as follows. The carboxylated form is one of the main organic components of the bone matrix, which constitutes 1-2% of the total bone protein. The carboxylated form binds strongly to apatite and calcium. This chain is Osteocalcin (BGLAP), found in Gallus gallus (Chicken).